We begin with the raw amino-acid sequence, 170 residues long: 4-hydroxyphenylacetate 3-monooxygenase reductase component (170 aa).

The protein belongs to the non-flavoprotein flavin reductase family. HpaC subfamily. As to quaternary structure, homodimer. 4-HPA 3-monooxygenase consists of a reductase component HpaC and an oxygenase component HpaB.

The enzyme catalyses a reduced flavin + NAD(+) = an oxidized flavin + NADH + 2 H(+). The protein operates within aromatic compound metabolism; 4-hydroxyphenylacetate degradation; pyruvate and succinate semialdehyde from 4-hydroxyphenylacetate: step 1/7. Catalyzes the reduction of free flavins (FMN, FAD and riboflavin) by NADH. Subsequently, the reduced flavins diffuse to the large HpaB component or to other electron acceptors such as cytochrome c and Fe(3+) ion. This chain is 4-hydroxyphenylacetate 3-monooxygenase reductase component (hpaC), found in Escherichia coli.